The chain runs to 4241 residues: Intermembrane lipid transfer protein vps13E (4241 aa).

The 93-residue stretch at 5 to 97 (ILPGLLKKIL…GPKDIINTFS (93 aa)) folds into the Chorein N-terminal domain. Over residues 120–140 (IDSNSNNNNKKNAPSSSSSND) the composition is skewed to low complexity. 8 disordered regions span residues 120–143 (IDSN…DDFF), 234–340 (LSKN…QQQQ), 942–986 (LGTG…VEKE), 1220–1256 (NNNN…NQKP), 1345–1369 (TTTT…QNRH), 1534–1571 (KPSS…YNNN), 2148–2192 (QQQQ…PNVH), and 2217–2282 (VTEK…NNIN). The segment covering 234–254 (LSKNTSTHQQQQPTFNPYVGS) has biased composition (polar residues). A compositionally biased stretch (low complexity) spans 255–264 (QQQQQQQPQQ). The span at 279 to 289 (FMNNKNSDEGI) shows a compositional bias: polar residues. 3 stretches are compositionally biased toward low complexity: residues 290–313 (SSSS…LNDN), 325–340 (QPTP…QQQQ), and 942–952 (LGTGNGINNNN). Positions 968–986 (DDGKYPEQDDLDDSKVEKE) are enriched in basic and acidic residues. A compositionally biased stretch (low complexity) spans 1220-1253 (NNNNNNNNNNNNNNNNNNNNNRNLNNNNNNNNNN). A compositionally biased stretch (basic residues) spans 1352–1369 (RYHHQNHHNHQHKKQNRH). Low complexity-rich tracts occupy residues 1538–1551 (KDNN…NNSD), 1559–1571 (DSSS…YNNN), and 2148–2177 (QQQQ…NNNN). Over residues 2178 to 2188 (VSGNTINNKSV) the composition is skewed to polar residues. The span at 2246 to 2259 (SDDDDDEGEDEDIG) shows a compositional bias: acidic residues. The span at 2265–2282 (DHSTSSAPTSRSNYNNIN) shows a compositional bias: polar residues. The 310-residue stretch at 2825–3134 (KIVFYNQYWI…IPYVWDLPLE (310 aa)) folds into the SHR-BD domain. Disordered stretches follow at residues 3973–4000 (PTTT…YPTE), 4059–4094 (YQHS…RQLQ), and 4109–4140 (KSMA…SGSG). The span at 3974–3984 (TTTTTTNTTTT) shows a compositional bias: low complexity. Polar residues predominate over residues 3985 to 4000 (PYQSSQNIHSTPYPTE). The segment covering 4128-4140 (SNNRLSLTPSGSG) has biased composition (polar residues).

This sequence belongs to the VPS13 family.

The protein resides in the membrane. Its function is as follows. Mediates the transfer of lipids between membranes at organelle contact sites. The chain is Intermembrane lipid transfer protein vps13E (vps13E) from Dictyostelium discoideum (Social amoeba).